Reading from the N-terminus, the 217-residue chain is Protein-L-isoaspartate O-methyltransferase (217 aa).

Ser64 is a catalytic residue.

This sequence belongs to the methyltransferase superfamily. L-isoaspartyl/D-aspartyl protein methyltransferase family.

It localises to the cytoplasm. The enzyme catalyses [protein]-L-isoaspartate + S-adenosyl-L-methionine = [protein]-L-isoaspartate alpha-methyl ester + S-adenosyl-L-homocysteine. Its function is as follows. Catalyzes the methyl esterification of L-isoaspartyl residues in peptides and proteins that result from spontaneous decomposition of normal L-aspartyl and L-asparaginyl residues. It plays a role in the repair and/or degradation of damaged proteins. The chain is Protein-L-isoaspartate O-methyltransferase from Rhodopseudomonas palustris (strain BisB5).